We begin with the raw amino-acid sequence, 266 residues long: N-formylglutamate deformylase (266 aa).

The protein belongs to the N-formylglutamate deformylase family. As to quaternary structure, monomer.

It carries out the reaction N-formyl-L-glutamate + H2O = formate + L-glutamate. Its pathway is amino-acid degradation; L-histidine degradation into L-glutamate; L-glutamate from N-formimidoyl-L-glutamate (deiminase route): step 2/2. Functionally, catalyzes the hydrolysis of N-formyl-L-glutamate to formate and L-glutamate. Shows weak activity with N-formyl-L-glutamine. The polypeptide is N-formylglutamate deformylase (Pseudomonas aeruginosa (strain ATCC 15692 / DSM 22644 / CIP 104116 / JCM 14847 / LMG 12228 / 1C / PRS 101 / PAO1)).